Reading from the N-terminus, the 169-residue chain is Cell division inhibitor SulA (169 aa).

Residues 106 to 112 are ftsZ binding; sequence ALRTGNY. Residues 162–169 form a lon protease binding region; it reads KIHSNLYH.

This sequence belongs to the SulA family. Interacts with FtsZ. Is rapidly cleaved and degraded by the Lon protease once DNA damage is repaired.

Component of the SOS system and an inhibitor of cell division. Accumulation of SulA causes rapid cessation of cell division and the appearance of long, non-septate filaments. In the presence of GTP, binds a polymerization-competent form of FtsZ in a 1:1 ratio, thus inhibiting FtsZ polymerization and therefore preventing it from participating in the assembly of the Z ring. This mechanism prevents the premature segregation of damaged DNA to daughter cells during cell division. In Salmonella agona (strain SL483), this protein is Cell division inhibitor SulA.